Reading from the N-terminus, the 381-residue chain is Cobalt-precorrin-5B C(1)-methyltransferase (381 aa).

Belongs to the CbiD family.

The enzyme catalyses Co-precorrin-5B + S-adenosyl-L-methionine = Co-precorrin-6A + S-adenosyl-L-homocysteine. The protein operates within cofactor biosynthesis; adenosylcobalamin biosynthesis; cob(II)yrinate a,c-diamide from sirohydrochlorin (anaerobic route): step 6/10. Catalyzes the methylation of C-1 in cobalt-precorrin-5B to form cobalt-precorrin-6A. The protein is Cobalt-precorrin-5B C(1)-methyltransferase of Prochlorococcus marinus (strain NATL2A).